The sequence spans 92 residues: Putative pterin-4-alpha-carbinolamine dehydratase (92 aa).

This sequence belongs to the pterin-4-alpha-carbinolamine dehydratase family.

It catalyses the reaction (4aS,6R)-4a-hydroxy-L-erythro-5,6,7,8-tetrahydrobiopterin = (6R)-L-erythro-6,7-dihydrobiopterin + H2O. The polypeptide is Putative pterin-4-alpha-carbinolamine dehydratase (Cereibacter sphaeroides (strain ATCC 17023 / DSM 158 / JCM 6121 / CCUG 31486 / LMG 2827 / NBRC 12203 / NCIMB 8253 / ATH 2.4.1.) (Rhodobacter sphaeroides)).